The chain runs to 319 residues: Cytochrome f (319 aa).

The N-terminal stretch at 1-35 (MQKKDVCEYITKWVSVTISTLVTIGVLVFPLSSEA) is a signal peptide. Heme contacts are provided by Tyr36, Cys56, Cys59, and His60. Residues 285-305 (IQGLLVFFASVVLAQIFLVLK) traverse the membrane as a helical segment.

It belongs to the cytochrome f family. The 4 large subunits of the cytochrome b6-f complex are cytochrome b6, subunit IV (17 kDa polypeptide, petD), cytochrome f and the Rieske protein, while the 4 small subunits are PetG, PetL, PetM and PetN. The complex functions as a dimer. Heme is required as a cofactor.

The protein resides in the plastid. The protein localises to the chloroplast thylakoid membrane. Its function is as follows. Component of the cytochrome b6-f complex, which mediates electron transfer between photosystem II (PSII) and photosystem I (PSI), cyclic electron flow around PSI, and state transitions. This Zygnema circumcarinatum (Green alga) protein is Cytochrome f.